We begin with the raw amino-acid sequence, 178 residues long: Epididymal-specific lipocalin-9 (178 aa).

The N-terminal stretch at 1–16 is a signal peptide; the sequence is MVLLLVLGLVLSLATA. N46, N68, and N129 each carry an N-linked (GlcNAc...) asparagine glycan. An intrachain disulfide couples C83 to C176.

It belongs to the calycin superfamily. Lipocalin family. Expressed in epididymis. Not detected in all other tissues tested.

It localises to the secreted. The sequence is that of Epididymal-specific lipocalin-9 (Lcn9) from Mus musculus (Mouse).